The primary structure comprises 386 residues: Cobalt-precorrin-5B C(1)-methyltransferase (386 aa).

It belongs to the CbiD family.

It carries out the reaction Co-precorrin-5B + S-adenosyl-L-methionine = Co-precorrin-6A + S-adenosyl-L-homocysteine. The protein operates within cofactor biosynthesis; adenosylcobalamin biosynthesis; cob(II)yrinate a,c-diamide from sirohydrochlorin (anaerobic route): step 6/10. In terms of biological role, catalyzes the methylation of C-1 in cobalt-precorrin-5B to form cobalt-precorrin-6A. The protein is Cobalt-precorrin-5B C(1)-methyltransferase of Prochlorococcus marinus (strain MIT 9303).